The sequence spans 298 residues: Acetyl-coenzyme A carboxylase carboxyl transferase subunit beta (298 aa).

Residues 26-295 enclose the CoA carboxyltransferase N-terminal domain; it reads LWIKCPETGE…DNANAVVPLA (270 aa).

Belongs to the AccD/PCCB family. In terms of assembly, acetyl-CoA carboxylase is a heterohexamer composed of biotin carboxyl carrier protein (AccB), biotin carboxylase (AccC) and two subunits each of ACCase subunit alpha (AccA) and ACCase subunit beta (AccD).

It localises to the cytoplasm. The catalysed reaction is N(6)-carboxybiotinyl-L-lysyl-[protein] + acetyl-CoA = N(6)-biotinyl-L-lysyl-[protein] + malonyl-CoA. It participates in lipid metabolism; malonyl-CoA biosynthesis; malonyl-CoA from acetyl-CoA: step 1/1. Functionally, component of the acetyl coenzyme A carboxylase (ACC) complex. Biotin carboxylase (BC) catalyzes the carboxylation of biotin on its carrier protein (BCCP) and then the CO(2) group is transferred by the transcarboxylase to acetyl-CoA to form malonyl-CoA. This chain is Acetyl-coenzyme A carboxylase carboxyl transferase subunit beta, found in Agrobacterium fabrum (strain C58 / ATCC 33970) (Agrobacterium tumefaciens (strain C58)).